Here is a 450-residue protein sequence, read N- to C-terminus: Glutamate-1-semialdehyde 2,1-aminomutase (450 aa).

Lysine 262 is subject to N6-(pyridoxal phosphate)lysine.

Belongs to the class-III pyridoxal-phosphate-dependent aminotransferase family. HemL subfamily. Homodimer. Pyridoxal 5'-phosphate serves as cofactor.

The protein resides in the cytoplasm. It carries out the reaction (S)-4-amino-5-oxopentanoate = 5-aminolevulinate. Its pathway is porphyrin-containing compound metabolism; protoporphyrin-IX biosynthesis; 5-aminolevulinate from L-glutamyl-tRNA(Glu): step 2/2. This is Glutamate-1-semialdehyde 2,1-aminomutase from Campylobacter hominis (strain ATCC BAA-381 / DSM 21671 / CCUG 45161 / LMG 19568 / NCTC 13146 / CH001A).